Reading from the N-terminus, the 317-residue chain is Prenyl transferase paxC (317 aa).

2 residues coordinate substrate: Lys-53 and His-86. Mg(2+) is bound by residues Asp-93 and Asp-97. Residues Arg-102, Lys-186, Thr-187, Gln-216, Asn-223, and Lys-233 each contribute to the substrate site.

It belongs to the FPP/GGPP synthase family.

The protein operates within secondary metabolite biosynthesis. Its function is as follows. Prenyl transferase; part of the gene cluster that mediates the biosynthesis of paxalline, a mycotoxin that acts as an inhibitor of mammalian maxi-K channels. PaxG, the geranylgeranyl diphosphate (GGPP) synthase is proposed to catalyze the first step in paxilline biosynthesis. Condensation of indole-3-glycerol phosphate with GGPP by paxC then forms 3-geranylgeranylindole (3-GGI), followed by epoxidation and cyclization of this intermediate (by paxM and paxB) to form paspaline. Paspaline is subsequently converted to 13-desoxypaxilline by paxP, the latter being then converted to paxilline by paxQ. Finally paxilline can be mono- and di-prenylated by paxD. This is Prenyl transferase paxC from Penicillium paxilli.